The following is a 232-amino-acid chain: Ribonuclease 3 (232 aa).

Residues 6–133 (LKEIEENLGV…IIAAVYLDKG (128 aa)) form the RNase III domain. Mg(2+) is bound at residue E46. D50 is a catalytic residue. Positions 119 and 122 each coordinate Mg(2+). Residue E122 is part of the active site. A DRBM domain is found at 160-229 (DFKTKLQELL…AKQALDILEG (70 aa)).

The protein belongs to the ribonuclease III family. Homodimer. Requires Mg(2+) as cofactor.

It is found in the cytoplasm. The catalysed reaction is Endonucleolytic cleavage to 5'-phosphomonoester.. Functionally, digests double-stranded RNA. Involved in the processing of primary rRNA transcript to yield the immediate precursors to the large and small rRNAs (23S and 16S). Processes some mRNAs, and tRNAs when they are encoded in the rRNA operon. Processes pre-crRNA and tracrRNA of type II CRISPR loci if present in the organism. The chain is Ribonuclease 3 from Clostridium beijerinckii (strain ATCC 51743 / NCIMB 8052) (Clostridium acetobutylicum).